Here is a 615-residue protein sequence, read N- to C-terminus: Delta(14)-sterol reductase LBR (615 aa).

The region spanning 1–62 (MPSRKFADGE…DIKPLTSFRQ (62 aa)) is the Tudor domain. Residues 1–211 (MPSRKFADGE…IRAKDLEFGG (211 aa)) are Nuclear-facing. Positions 52 to 109 (NDIKPLTSFRQRKGGSTSSSPSRRRGSRSRSRSRSPGRPPKSARRSASASHQADIKEA) are disordered. Lys-55 is modified (N6-acetyllysine). Residue Thr-58 is modified to Phosphothreonine. Phosphoserine occurs at positions 59 and 67. Phosphoserine; by CDK1 occurs at positions 71 and 86. The segment covering 73-86 (SRRRGSRSRSRSRS) has biased composition (basic residues). Ser-97 and Ser-99 each carry phosphoserine. A Phosphothreonine modification is found at Thr-118. Phosphoserine is present on Ser-128. Thr-200 is subject to Phosphothreonine. 8 helical membrane passes run 212-232 (VPGV…LLLM), 258-278 (VFGV…LPIG), 299-319 (FYAF…GVEF), 326-346 (FLQF…YLYM), 386-406 (FCEL…MLLA), 447-467 (IIHD…VPFI), 481-501 (EVSW…YVIF), and 561-581 (PCGF…MLLV). N6-acetyllysine occurs at positions 594 and 601.

The protein belongs to the ERG4/ERG24 family. As to quaternary structure, interacts with CBX5. Interacts with DNA. Interaction with DNA is sequence independent with higher affinity for supercoiled and relaxed circular DNA than linear DNA. Interacts with lamin B. Interacts with CLNK. Interacts with TMEM147; promoting LBR localization to the nucleus inner membrane. Phosphorylated by CDK1 in mitosis when the inner nuclear membrane breaks down into vesicles that dissociate from the lamina and the chromatin. It is phosphorylated by different protein kinases in interphase when the membrane is associated with these structures. Phosphorylation of LBR and HP1 proteins may be responsible for some of the alterations in chromatin organization and nuclear structure which occur at various times during the cell cycle. Phosphorylated by SRPK1. In late anaphase LBR is dephosphorylated, probably by PP1 and/or PP2A, allowing reassociation with chromatin. Expressed in the bone marrow, liver, heart, adrenal gland, lung, placenta and uterus. Expressed in osteoclasts and osteoblast-like cells.

The protein localises to the nucleus inner membrane. Its subcellular location is the endoplasmic reticulum membrane. It is found in the cytoplasm. It localises to the nucleus. The enzyme catalyses 5alpha-cholest-8,14-dien-3beta-ol + NADPH + H(+) = 5alpha-cholest-8-en-3beta-ol + NADP(+). It carries out the reaction 4,4-dimethyl-5alpha-cholesta-8,24-dien-3beta-ol + NADP(+) = 4,4-dimethyl-5alpha-cholesta-8,14,24-trien-3beta-ol + NADPH + H(+). The catalysed reaction is 4,4-dimethyl-8,14-cholestadien-3beta-ol + NADPH + H(+) = 4,4-dimethyl-5alpha-cholest-8-en-3beta-ol + NADP(+). It participates in steroid biosynthesis; cholesterol biosynthesis. Its function is as follows. Catalyzes the reduction of the C14-unsaturated bond of lanosterol, as part of the metabolic pathway leading to cholesterol biosynthesis. Plays a critical role in myeloid cell cholesterol biosynthesis which is essential to both myeloid cell growth and functional maturation. Mediates the activation of NADPH oxidases, perhaps by maintaining critical levels of cholesterol required for membrane lipid raft formation during neutrophil differentiation. Anchors the lamina and the heterochromatin to the inner nuclear membrane. The protein is Delta(14)-sterol reductase LBR (LBR) of Homo sapiens (Human).